The primary structure comprises 141 residues: uncharacterized protein (141 aa).

The first 15 residues, 1–15, serve as a signal peptide directing secretion; that stretch reads MKKVAIVGALLVLAG. Cysteine 16 carries N-palmitoyl cysteine lipidation. Residue cysteine 16 is the site of S-diacylglycerol cysteine attachment.

It localises to the cell membrane. This is an uncharacterized protein from Salmonella typhimurium (strain LT2 / SGSC1412 / ATCC 700720).